A 218-amino-acid chain; its full sequence is Elongation factor Ts (218 aa).

Residues 82–85 are involved in Mg(2+) ion dislocation from EF-Tu; it reads TDFV.

This sequence belongs to the EF-Ts family.

The protein resides in the cytoplasm. Its function is as follows. Associates with the EF-Tu.GDP complex and induces the exchange of GDP to GTP. It remains bound to the aminoacyl-tRNA.EF-Tu.GTP complex up to the GTP hydrolysis stage on the ribosome. The chain is Elongation factor Ts from Prochlorococcus marinus (strain MIT 9312).